The primary structure comprises 802 residues: Putative transcriptional regulator cudA (802 aa).

Disordered regions lie at residues 1 to 148 (MNQS…PSAI), 154 to 173 (ISNN…NLLL), 381 to 446 (NNIN…NNEN), and 636 to 658 (QPQQ…QQGQ). Residues 25-63 (NNNNNGNNGMMMNQQQMQQHVVPHLHHLQQQQQQPQQQQ) are compositionally biased toward low complexity. The segment covering 69 to 88 (DYSNSPNGTTNGSTMSPNCI) has biased composition (polar residues). Residues 89–128 (NTNNNNNNNNNNNNNSNNNNNNNNNASNNLTSNKSSSTNT) show a composition bias toward low complexity. The span at 129-142 (PQIGQLQASPANLT) shows a compositional bias: polar residues. Residues 381–445 (NNINNNNNIN…CNNNNNNNNE (65 aa)) show a composition bias toward low complexity.

As to expression, expressed in the prestalk cells that constitute the slug tip (pstA cells) and in prespore cells (at protein level). Not expressed in the band of prestalk cells that lies behind the slug tip (pstO cells). Highly expressed in pstO derived papilla cells during culmination.

The protein resides in the nucleus. The protein localises to the nucleoplasm. Its function is as follows. Essential for normal culmination. May function as a transcriptional regulator. The polypeptide is Putative transcriptional regulator cudA (cudA) (Dictyostelium discoideum (Social amoeba)).